The following is a 641-amino-acid chain: Serine/threonine-protein kinase PK-1 (641 aa).

The Protein kinase domain occupies 18 to 280 (YRVDARIAVG…ARARDARARL (263 aa)). ATP-binding positions include 24–32 (IAVGGMATV) and Lys-47. Asp-141 acts as the Proton acceptor in catalysis. Residues 317 to 347 (LPVNEEDEGADAAHRTSRFRSPPPLPPRGRT) form a disordered region. PASTA domains follow at residues 375-441 (SGQF…TLSK), 442-508 (GPRT…LTVS), 509-576 (KGAP…TLSK), and 577-641 (GPEM…IEIR). The interval 469–494 (KPGMSTREFSDSVPAGSVISTEPGKG) is disordered.

It belongs to the protein kinase superfamily. Ser/Thr protein kinase family. Post-translationally, autophosphorylated on threonine residue(s).

It catalyses the reaction L-seryl-[protein] + ATP = O-phospho-L-seryl-[protein] + ADP + H(+). It carries out the reaction L-threonyl-[protein] + ATP = O-phospho-L-threonyl-[protein] + ADP + H(+). This Streptomyces toyocaensis protein is Serine/threonine-protein kinase PK-1 (spk1).